Here is a 457-residue protein sequence, read N- to C-terminus: Bifunctional protein GlmU (457 aa).

The segment at 1–230 (MPLSLPLHIV…PREVEGVNDL (230 aa)) is pyrophosphorylase. UDP-N-acetyl-alpha-D-glucosamine-binding positions include 12-15 (LAAG), K26, Q78, 83-84 (GT), 105-107 (YGD), G140, E155, N170, and N228. D107 provides a ligand contact to Mg(2+). N228 provides a ligand contact to Mg(2+). Positions 231–251 (WQLTQLERTWQIRAARALCLQ) are linker. Residues 252–457 (GARVADPARL…DGWQRPKKKT (206 aa)) are N-acetyltransferase. The UDP-N-acetyl-alpha-D-glucosamine site is built by R334 and K352. The Proton acceptor role is filled by H364. Residues Y367 and N378 each contribute to the UDP-N-acetyl-alpha-D-glucosamine site. Residues A381, 387–388 (NY), S406, A424, and R441 contribute to the acetyl-CoA site.

It in the N-terminal section; belongs to the N-acetylglucosamine-1-phosphate uridyltransferase family. The protein in the C-terminal section; belongs to the transferase hexapeptide repeat family. As to quaternary structure, homotrimer. Requires Mg(2+) as cofactor.

The protein resides in the cytoplasm. The catalysed reaction is alpha-D-glucosamine 1-phosphate + acetyl-CoA = N-acetyl-alpha-D-glucosamine 1-phosphate + CoA + H(+). The enzyme catalyses N-acetyl-alpha-D-glucosamine 1-phosphate + UTP + H(+) = UDP-N-acetyl-alpha-D-glucosamine + diphosphate. It participates in nucleotide-sugar biosynthesis; UDP-N-acetyl-alpha-D-glucosamine biosynthesis; N-acetyl-alpha-D-glucosamine 1-phosphate from alpha-D-glucosamine 6-phosphate (route II): step 2/2. It functions in the pathway nucleotide-sugar biosynthesis; UDP-N-acetyl-alpha-D-glucosamine biosynthesis; UDP-N-acetyl-alpha-D-glucosamine from N-acetyl-alpha-D-glucosamine 1-phosphate: step 1/1. The protein operates within bacterial outer membrane biogenesis; LPS lipid A biosynthesis. Functionally, catalyzes the last two sequential reactions in the de novo biosynthetic pathway for UDP-N-acetylglucosamine (UDP-GlcNAc). The C-terminal domain catalyzes the transfer of acetyl group from acetyl coenzyme A to glucosamine-1-phosphate (GlcN-1-P) to produce N-acetylglucosamine-1-phosphate (GlcNAc-1-P), which is converted into UDP-GlcNAc by the transfer of uridine 5-monophosphate (from uridine 5-triphosphate), a reaction catalyzed by the N-terminal domain. This is Bifunctional protein GlmU from Xylella fastidiosa (strain M12).